Consider the following 253-residue polypeptide: Uracil-DNA glycosylase (253 aa).

The active-site Proton acceptor is aspartate 79.

The protein belongs to the uracil-DNA glycosylase (UDG) superfamily. UNG family.

It is found in the cytoplasm. It carries out the reaction Hydrolyzes single-stranded DNA or mismatched double-stranded DNA and polynucleotides, releasing free uracil.. Functionally, excises uracil residues from the DNA which can arise as a result of misincorporation of dUMP residues by DNA polymerase or due to deamination of cytosine. This chain is Uracil-DNA glycosylase, found in Xylella fastidiosa (strain M12).